The primary structure comprises 261 residues: uncharacterized protein (261 aa).

Positions 1-22 (MRDSKRVVLYISIMVLSIFIIG) are cleaved as a signal peptide. Cysteine 23 is lipidated: N-palmitoyl cysteine. A lipid anchor (S-diacylglycerol cysteine) is attached at cysteine 23.

Belongs to the staphylococcal tandem lipoprotein family.

It localises to the cell membrane. This is an uncharacterized protein from Staphylococcus aureus (strain N315).